A 667-amino-acid polypeptide reads, in one-letter code: Chaperone protein DnaK (667 aa).

Threonine 196 is modified (phosphothreonine; by autocatalysis). Disordered stretches follow at residues 495-525 (EANSGLSDEEIEKMKEEAEQHAEEDERRKER) and 595-667 (AGEE…GDDE). The span at 506-525 (EKMKEEAEQHAEEDERRKER) shows a compositional bias: basic and acidic residues. Residues 595–612 (AGEEIREAQQQQAQQGAA) show a composition bias toward low complexity. Gly residues predominate over residues 630-641 (GPAGGPTGGPAS). The segment covering 647–667 (DSDEEDVQDADYEVVDEGDDE) has biased composition (acidic residues).

The protein belongs to the heat shock protein 70 family.

Functionally, acts as a chaperone. In Salinibacter ruber (strain DSM 13855 / M31), this protein is Chaperone protein DnaK.